The following is a 281-amino-acid chain: Nuclear transcription factor Y subunit nfya-2 (281 aa).

Disordered stretches follow at residues 1–27 (MNPR…ARPQ) and 163–261 (REMR…VQEE). A Subunit association domain (SAD) motif is present at residues 150–173 (MVNPRQYKRIIKRREMRQKMEDSG). The span at 166–188 (RQKMEDSGRLPLERQKYMHESRR) shows a compositional bias: basic and acidic residues. The NFYA/HAP2-type DNA-binding region spans 180–204 (QKYMHESRRQHALKRRRTGGRFDAN). Residues 189–198 (QHALKRRRTG) are compositionally biased toward basic residues. A compositionally biased stretch (low complexity) spans 204-220 (NAEAAAASSEPSISSAA).

The protein belongs to the NFYA/HAP2 subunit family. Forms a heterotrimeric transcription factor complex (nfya-2-NF-Y complex) composed of nfya-2, nfyb-1 and nfyc-1. Interacts with the nfyb-1 and nfyc-1 dimer; the interaction is required for subsequent binding to the 5'-CCAAT-3' box motif in DNA. Does not interact with either nfyb-1 or nfyc-1 in their monomeric form. In terms of tissue distribution, highly expressed in certain parts of the gonads. Expressed in the spermatheca, intestine and in some neurons in the head. Not expressed in the intestine, the hypodermis, body wall muscle surrounding the pseudocoelomic space, secretory cells in the pharyngeal terminal bulb wall, in the small ganglia surrounding the pharynx and in the neurons running anteriorly to the sensory organs in the head.

The protein localises to the nucleus. Component of the sequence-specific heterotrimeric transcription factor (nfya-2-NF-Y) which specifically recognizes a 5'-CCAAT-3' box motif found in the promoters of its target genes to regulate their expression and control cellular identity in particular tissue types. In association with the components in the nfya-2-NF-Y complex, may repress the expression of the T-box transcription factor tbx-2 throughout larval development, which most likely restricts its expression to certain tissues. This Caenorhabditis elegans protein is Nuclear transcription factor Y subunit nfya-2.